We begin with the raw amino-acid sequence, 88 residues long: ATP synthase subunit c 2 (88 aa).

2 helical membrane-spanning segments follow: residues Phe-4–Ile-24 and Ile-53–Leu-73.

This sequence belongs to the ATPase C chain family. In terms of assembly, F-type ATPases have 2 components, F(1) - the catalytic core - and F(0) - the membrane proton channel. F(1) has five subunits: alpha(3), beta(3), gamma(1), delta(1), epsilon(1). F(0) has three main subunits: a(1), b(2) and c(10-14). The alpha and beta chains form an alternating ring which encloses part of the gamma chain. F(1) is attached to F(0) by a central stalk formed by the gamma and epsilon chains, while a peripheral stalk is formed by the delta and b chains.

It is found in the cell inner membrane. Its function is as follows. F(1)F(0) ATP synthase produces ATP from ADP in the presence of a proton or sodium gradient. F-type ATPases consist of two structural domains, F(1) containing the extramembraneous catalytic core and F(0) containing the membrane proton channel, linked together by a central stalk and a peripheral stalk. During catalysis, ATP synthesis in the catalytic domain of F(1) is coupled via a rotary mechanism of the central stalk subunits to proton translocation. Functionally, key component of the F(0) channel; it plays a direct role in translocation across the membrane. A homomeric c-ring of between 10-14 subunits forms the central stalk rotor element with the F(1) delta and epsilon subunits. The sequence is that of ATP synthase subunit c 2 from Syntrophotalea carbinolica (strain DSM 2380 / NBRC 103641 / GraBd1) (Pelobacter carbinolicus).